The chain runs to 71 residues: uncharacterized protein (71 aa).

Residues 1 to 71 are disordered; sequence MLFETLKSLS…AFFSRPFYSE (71 aa). A compositionally biased stretch (polar residues) spans 7 to 33; it reads KSLSQQNGGQFSDEQSFESPISSSFNG. Positions 35 to 65 are enriched in low complexity; the sequence is SMPFGSPSSTMSSSYKGNTNSSTKSSSAFFS.

This is an uncharacterized protein from Dictyostelium discoideum (Social amoeba).